The following is a 519-amino-acid chain: Baeyer-Villiger monooxygenase (519 aa).

FAD-binding positions include E41, 49–52 (TWRD), D61, Y67, and V110. 59 to 61 (ACD) contributes to the NADP(+) binding site. NADP(+) is bound by residues 183 to 189 (TGASAIQ), 206 to 207 (RT), and 292 to 293 (KR). Position 399 (M399) interacts with FAD. Positions 499–519 (GAKAAEADTGADTGADAEVSA) are disordered.

This sequence belongs to the FAD-binding monooxygenase family. FAD serves as cofactor.

Catalyzes a Baeyer-Villiger oxidation reaction, i.e. the insertion of an oxygen atom into a carbon-carbon bond adjacent to a carbonyl, which converts ketones to esters or lactones using NADPH and/or NADH as an electron donor. Thus, can convert bicyclo[3.2.0]hept-2-en-6-one into the oxidative lactone products 2-oxabicyclo[3.3.0]oct-6-en-3-one and 3-oxabicyclo[3.3.0]oct-6-en-2-one. Is also able to catalyze the sulfoxidation of methyl phenyl sulfide (thioanisole). In Streptomyces coelicolor (strain ATCC BAA-471 / A3(2) / M145), this protein is Baeyer-Villiger monooxygenase.